We begin with the raw amino-acid sequence, 196 residues long: UMP-CMP kinase (196 aa).

13-18 (GAGKGT) contacts ATP. Serine 33 is subject to Phosphoserine. The NMP stretch occupies residues 33–63 (SAGELLRDERKNPDSQYGELIEKYIKDGKIV). Arginine 39 lines the a ribonucleoside 5'-phosphate pocket. N6-acetyllysine occurs at positions 43 and 55. A ribonucleoside 5'-phosphate contacts are provided by residues 61-63 (KIV) and 93-96 (GFPR). CMP is bound at residue asparagine 100. Lysine 106 bears the N6-succinyllysine mark. The tract at residues 133 to 143 (ERGKSSGRSDD) is LID. Arginine 134 provides a ligand contact to ATP. Positions 140 and 151 each coordinate a ribonucleoside 5'-phosphate. Lysine 179 contributes to the ATP binding site. Serine 180 carries the post-translational modification Phosphoserine.

This sequence belongs to the adenylate kinase family. UMP-CMP kinase subfamily. In terms of assembly, monomer. Mg(2+) is required as a cofactor.

It localises to the nucleus. It is found in the cytoplasm. The enzyme catalyses CMP + ATP = CDP + ADP. The catalysed reaction is dCMP + ATP = dCDP + ADP. It catalyses the reaction UMP + ATP = UDP + ADP. It carries out the reaction a 2'-deoxyribonucleoside 5'-diphosphate + ATP = a 2'-deoxyribonucleoside 5'-triphosphate + ADP. The enzyme catalyses a ribonucleoside 5'-diphosphate + ATP = a ribonucleoside 5'-triphosphate + ADP. Catalyzes the phosphorylation of pyrimidine nucleoside monophosphates at the expense of ATP. Plays an important role in de novo pyrimidine nucleotide biosynthesis. Has preference for UMP and CMP as phosphate acceptors. Also displays broad nucleoside diphosphate kinase activity. The chain is UMP-CMP kinase from Bos taurus (Bovine).